Reading from the N-terminus, the 582-residue chain is Aspartate--tRNA(Asp/Asn) ligase (582 aa).

Glu177 contributes to the L-aspartate binding site. Residues 201–204 are aspartate; it reads QLFK. Arg223 lines the L-aspartate pocket. Residues 223–225 and Gln232 each bind ATP; that span reads RDE. Position 447 (His447) interacts with L-aspartate. Glu481 contacts ATP. Arg488 contacts L-aspartate. 533–536 serves as a coordination point for ATP; that stretch reads GLDR.

This sequence belongs to the class-II aminoacyl-tRNA synthetase family. Type 1 subfamily. As to quaternary structure, homodimer.

It localises to the cytoplasm. It carries out the reaction tRNA(Asx) + L-aspartate + ATP = L-aspartyl-tRNA(Asx) + AMP + diphosphate. Its function is as follows. Aspartyl-tRNA synthetase with relaxed tRNA specificity since it is able to aspartylate not only its cognate tRNA(Asp) but also tRNA(Asn). Reaction proceeds in two steps: L-aspartate is first activated by ATP to form Asp-AMP and then transferred to the acceptor end of tRNA(Asp/Asn). The chain is Aspartate--tRNA(Asp/Asn) ligase from Chlamydia muridarum (strain MoPn / Nigg).